Reading from the N-terminus, the 428-residue chain is Lysophosphatidic acid phosphatase type 6 (428 aa).

The transit peptide at 1–32 directs the protein to the mitochondrion; it reads MITGVFSMRLWTPVGVLTSLAYCLHQRRVALA. The tract at residues 58-168 is substrate binding; the sequence is RHGARSPRKP…VFIRSTNIFR (111 aa). Histidine 59 (nucleophile) is an active-site residue. Aspartate 335 (proton donor) is an active-site residue.

It belongs to the histidine acid phosphatase family. In terms of assembly, monomer.

It localises to the mitochondrion. The enzyme catalyses a phosphate monoester + H2O = an alcohol + phosphate. It carries out the reaction 1-(9Z-octadecenoyl)-sn-glycero-3-phosphate + H2O = 1-(9Z-octadecenoyl)-sn-glycerol + phosphate. Hydrolyzes lysophosphatidic acid (LPA) containing a medium length fatty acid chain to the corresponding monoacylglycerol. Has highest activity with lysophosphatidic acid containing myristate (C14:0), monounsaturated oleate (C18:1) or palmitate (C16:0), and lower activity with C18:0 and C6:0 lysophosphatidic acid. This chain is Lysophosphatidic acid phosphatase type 6 (ACP6), found in Pongo abelii (Sumatran orangutan).